Consider the following 249-residue polypeptide: MAAGMYLEHYLDSIENLPFELQRNFQLMRDLDQRTEDLKAEIDKLATEYMSSARSLSSEEKLALLRQIQEAYGKCKEFGDDKVQLAMQTYEMVDKHIRRLDTDLARFEADLKEKQIESSDYDSSSSKGKKKGRTQKEKKAARARSKGKNSDEEAPKAAQKKLKLVRTSPEYGMPSVTFGSVHPSDVLDMPVDPNEPTYCLCHQVSYGEMIGCDNPDCSIEWFHFACVGLTTKPRGKWFCPRCSQERKKK.

The stretch at 25–118 (FQLMRDLDQR…ADLKEKQIES (94 aa)) forms a coiled coil. 3 positions are modified to N6-acetyllysine: lysine 112, lysine 127, and lysine 129. Positions 115–163 (QIESSDYDSSSSKGKKKGRTQKEKKAARARSKGKNSDEEAPKAAQKKLK) are disordered. Positions 127 to 148 (KGKKKGRTQKEKKAARARSKGK) match the Bipartite nuclear localization signal motif. Arginine 133 is modified (citrulline). Residues lysine 146, lysine 148, and lysine 156 each carry the N6-acetyllysine modification. Arginine 166 carries the post-translational modification Citrulline. The PHD-type zinc-finger motif lies at 196–245 (PTYCLCHQVSYGEMIGCDNPDCSIEWFHFACVGLTTKPRGKWFCPRCSQE). Residues cysteine 199, cysteine 201, cysteine 212, cysteine 217, histidine 223, cysteine 226, cysteine 239, and cysteine 242 each contribute to the Zn(2+) site.

The protein belongs to the ING family. Homodimer. Component of the HBO1 complex composed of KAT7/HBO1, MEAF6, ING4 or ING5, and one scaffold subunit: complexes containing BRPF scaffold (BRPF1, BRD1/BRPF2 or BRPF3) direct KAT7/HBO1 specificity towards H3K14ac, while complexes containing JADE scaffold (JADE1, JADE2 and JADE3) mediate acetylation of histone H4. Interacts with H3K4me3 and to a lesser extent with H3K4me2, the interaction augments KAT7/HBO1 acetylation activity on H3 tails. Interacts with EP300, RELA and TP53; these interactions may be indirect. Interacts with EGLN1. In terms of assembly, interacts with BCL2A1. Citrullination by PADI4 within the nuclear localization signal disrupts the interaction with p53 and increases susceptibility to degradation. Isoform 2, isoform 3, isoform 4 and isoform 5 are expressed in the mammary gland, ovary, spleen and muscle. In terms of tissue distribution, expressed in the mammary gland, ovary, spleen and muscle.

Its subcellular location is the nucleus. In terms of biological role, component of HBO1 complexes, which specifically mediate acetylation of histone H3 at 'Lys-14' (H3K14ac), and have reduced activity toward histone H4. Through chromatin acetylation it may function in DNA replication. May inhibit tumor progression by modulating the transcriptional output of signaling pathways which regulate cell proliferation. Can suppress brain tumor angiogenesis through transcriptional repression of RELA/NFKB3 target genes when complexed with RELA. May also specifically suppress loss of contact inhibition elicited by activated oncogenes such as MYC. Represses hypoxia inducible factor's (HIF) activity by interacting with HIF prolyl hydroxylase 2 (EGLN1). Can enhance apoptosis induced by serum starvation in mammary epithelial cell line HC11. This is Inhibitor of growth protein 4 (Ing4) from Mus musculus (Mouse).